The primary structure comprises 383 residues: GDSL esterase/lipase At1g28610 (383 aa).

The first 22 residues, 1–22 (MASLDSLVSFFLSTLFVTIVSS), serve as a signal peptide directing secretion. Serine 38 serves as the catalytic Nucleophile. Asparagine 134, asparagine 184, and asparagine 315 each carry an N-linked (GlcNAc...) asparagine glycan. Active-site residues include aspartate 340 and histidine 343.

The protein belongs to the 'GDSL' lipolytic enzyme family.

Its subcellular location is the secreted. In Arabidopsis thaliana (Mouse-ear cress), this protein is GDSL esterase/lipase At1g28610.